We begin with the raw amino-acid sequence, 82 residues long: uncharacterized protein (82 aa).

A run of 2 helical transmembrane segments spans residues 32 to 52 (PFSI…IGIL) and 59 to 79 (SKPL…FNII).

The protein localises to the cell membrane. This is an uncharacterized protein from Rickettsia prowazekii (strain Madrid E).